Consider the following 187-residue polypeptide: UPF0340 protein SP_0663 (187 aa).

This sequence belongs to the UPF0340 family.

In Streptococcus pneumoniae serotype 4 (strain ATCC BAA-334 / TIGR4), this protein is UPF0340 protein SP_0663.